A 237-amino-acid polypeptide reads, in one-letter code: MAYARVLLKLSGEALMGDQSYGIDPAIVQSIAEDVAKVVAKGTQLAIVVGGGNIFRGLKGSAAGMDRATADYVGMLATVMNAITLQDGLERAGVPTRVQTAIEMQEVAEPYIRRRAIRHLEKGRVVVFGGGCGNPFFTTDTTASLRAAEINADVVFKATKVDGVYDRDPKRFPDATRYDSLTFQQVLSGELAVMDSTAIALCKDNNIPIVVFDLFEPGNIGKAVAGEAIGSRISNAT.

9 to 12 (KLSG) is an ATP binding site. Position 51 (G51) interacts with UMP. ATP contacts are provided by G52 and R56. UMP contacts are provided by residues D71 and 132–139 (CGNPFFTT). T159, Y165, and D168 together coordinate ATP.

The protein belongs to the UMP kinase family. In terms of assembly, homohexamer.

Its subcellular location is the cytoplasm. It carries out the reaction UMP + ATP = UDP + ADP. It functions in the pathway pyrimidine metabolism; CTP biosynthesis via de novo pathway; UDP from UMP (UMPK route): step 1/1. With respect to regulation, inhibited by UTP. Its function is as follows. Catalyzes the reversible phosphorylation of UMP to UDP. This Prochlorococcus marinus (strain MIT 9313) protein is Uridylate kinase.